We begin with the raw amino-acid sequence, 363 residues long: NADH-quinone oxidoreductase subunit H (363 aa).

Transmembrane regions (helical) follow at residues 29 to 49, 62 to 82, 96 to 116, 127 to 147, 163 to 183, 202 to 222, 239 to 257, 264 to 286, 299 to 319, and 339 to 359; these read VLKI…YVVW, GPMY…KLLF, FIIA…VVPF, VGLL…ILAG, AAQV…VMIA, FFDW…VSGV, IVAG…LFFL, ILVS…QGWV, TGGW…YIWF, and FIPL…YGVI.

Belongs to the complex I subunit 1 family. As to quaternary structure, NDH-1 is composed of 14 different subunits. Subunits NuoA, H, J, K, L, M, N constitute the membrane sector of the complex.

Its subcellular location is the cell inner membrane. It carries out the reaction a quinone + NADH + 5 H(+)(in) = a quinol + NAD(+) + 4 H(+)(out). In terms of biological role, NDH-1 shuttles electrons from NADH, via FMN and iron-sulfur (Fe-S) centers, to quinones in the respiratory chain. The immediate electron acceptor for the enzyme in this species is believed to be ubiquinone. Couples the redox reaction to proton translocation (for every two electrons transferred, four hydrogen ions are translocated across the cytoplasmic membrane), and thus conserves the redox energy in a proton gradient. This subunit may bind ubiquinone. The polypeptide is NADH-quinone oxidoreductase subunit H (Xanthomonas campestris pv. campestris (strain 8004)).